The primary structure comprises 217 residues: Large ribosomal subunit protein bL21m (217 aa).

Over residues 61-81 (PPKVTTATTPEAPAAVPTSTP) the composition is skewed to low complexity. The disordered stretch occupies residues 61-87 (PPKVTTATTPEAPAAVPTSTPFSQQPP).

Belongs to the bacterial ribosomal protein bL21 family. Component of the mitochondrial large ribosomal subunit (mt-LSU). Mature N.crassa 74S mitochondrial ribosomes consist of a small (37S) and a large (54S) subunit. The 37S small subunit contains a 16S ribosomal RNA (16S mt-rRNA) and 32 different proteins. The 54S large subunit contains a 23S rRNA (23S mt-rRNA) and 42 different proteins.

The protein resides in the mitochondrion. Functionally, component of the mitochondrial ribosome (mitoribosome), a dedicated translation machinery responsible for the synthesis of mitochondrial genome-encoded proteins, including at least some of the essential transmembrane subunits of the mitochondrial respiratory chain. The mitoribosomes are attached to the mitochondrial inner membrane and translation products are cotranslationally integrated into the membrane. The chain is Large ribosomal subunit protein bL21m (mrpl49) from Neurospora crassa (strain ATCC 24698 / 74-OR23-1A / CBS 708.71 / DSM 1257 / FGSC 987).